Reading from the N-terminus, the 495-residue chain is UDP-glycosyltransferase 71B7 (495 aa).

Residues Ser-284, 351 to 353 (APQ), 368 to 376 (HCGWNSTLE), and 390 to 393 (YAEQ) each bind UDP-alpha-D-glucose.

Belongs to the UDP-glycosyltransferase family.

This is UDP-glycosyltransferase 71B7 (UGT71B7) from Arabidopsis thaliana (Mouse-ear cress).